The primary structure comprises 301 residues: Ornithine carbamoyltransferase (301 aa).

Carbamoyl phosphate is bound by residues Arg100 and 127 to 130 (HPCQ). L-ornithine is bound by residues Asn158, Asp221, and 225-226 (SM). 2 residues coordinate carbamoyl phosphate: Cys260 and Arg288.

The protein belongs to the aspartate/ornithine carbamoyltransferase superfamily. OTCase family. Homododecamer.

The protein localises to the cytoplasm. The catalysed reaction is carbamoyl phosphate + L-ornithine = L-citrulline + phosphate + H(+). It functions in the pathway amino-acid biosynthesis; L-arginine biosynthesis; L-arginine from L-ornithine and carbamoyl phosphate: step 1/3. Functionally, reversibly catalyzes the transfer of the carbamoyl group from carbamoyl phosphate (CP) to the N(epsilon) atom of ornithine (ORN) to produce L-citrulline. This is Ornithine carbamoyltransferase (argF) from Moritella profunda.